We begin with the raw amino-acid sequence, 151 residues long: Large ribosomal subunit protein uL15 (151 aa).

The disordered stretch occupies residues 1-45 (MNLSSLKPVKGSTKTCKRVGRGQGSGCGGTSTRGHKGQKSRSGYS). Gly residues predominate over residues 21–31 (RGQGSGCGGTS).

Belongs to the universal ribosomal protein uL15 family. As to quaternary structure, part of the 50S ribosomal subunit.

Functionally, binds to the 23S rRNA. The protein is Large ribosomal subunit protein uL15 of Azobacteroides pseudotrichonymphae genomovar. CFP2.